Reading from the N-terminus, the 1400-residue chain is DNA-directed RNA polymerase subunit beta' (1400 aa).

C70, C72, C85, and C88 together coordinate Zn(2+). 3 residues coordinate Mg(2+): D460, D462, and D464. 4 residues coordinate Zn(2+): C814, C887, C894, and C897.

This sequence belongs to the RNA polymerase beta' chain family. In terms of assembly, the RNAP catalytic core consists of 2 alpha, 1 beta, 1 beta' and 1 omega subunit. When a sigma factor is associated with the core the holoenzyme is formed, which can initiate transcription. The cofactor is Mg(2+). Zn(2+) serves as cofactor.

The catalysed reaction is RNA(n) + a ribonucleoside 5'-triphosphate = RNA(n+1) + diphosphate. Its function is as follows. DNA-dependent RNA polymerase catalyzes the transcription of DNA into RNA using the four ribonucleoside triphosphates as substrates. This chain is DNA-directed RNA polymerase subunit beta', found in Marinomonas sp. (strain MWYL1).